We begin with the raw amino-acid sequence, 441 residues long: Protein arginine methyltransferase NDUFAF7, mitochondrial (441 aa).

The transit peptide at 1-46 directs the protein to the mitochondrion; it reads MNFLAAAGVRRLCAMRAVLPCLWRGKYFSSGNEPAENNTVTPMLRH. The interval 415 to 434 is disordered; that stretch reads GRNHQTNARQSKPSPSPVAG. A compositionally biased stretch (polar residues) spans 418–427; it reads HQTNARQSKP.

This sequence belongs to the NDUFAF7 family. As to quaternary structure, interacts with NDUFS2.

The protein localises to the mitochondrion. The catalysed reaction is L-arginyl-[protein] + 2 S-adenosyl-L-methionine = N(omega),N(omega)'-dimethyl-L-arginyl-[protein] + 2 S-adenosyl-L-homocysteine + 2 H(+). In terms of biological role, arginine methyltransferase involved in the assembly or stability of mitochondrial NADH:ubiquinone oxidoreductase complex (complex I). Acts by mediating symmetric dimethylation of 'Arg-118' of NDUFS2 after it assembles into the complex I, stabilizing the early intermediate complex. This Bos taurus (Bovine) protein is Protein arginine methyltransferase NDUFAF7, mitochondrial.